The following is a 222-amino-acid chain: UPF0758 protein Mpe_A2695 (222 aa).

Residues 100 to 222 (VFDSPQAVKD…VVSFAERGLL (123 aa)) enclose the MPN domain. The Zn(2+) site is built by His171, His173, and Asp184. The short motif at 171-184 (HNHPSGVAEPSRAD) is the JAMM motif element.

Belongs to the UPF0758 family.

In Methylibium petroleiphilum (strain ATCC BAA-1232 / LMG 22953 / PM1), this protein is UPF0758 protein Mpe_A2695.